The sequence spans 193 residues: General stress protein 16U (193 aa).

Belongs to the CAPAB/TerDEXZ family.

The sequence is that of General stress protein 16U (yceD) from Bacillus subtilis (strain 168).